Here is a 147-residue protein sequence, read N- to C-terminus: UPF0306 protein YhbP (147 aa).

This sequence belongs to the UPF0306 family.

This chain is UPF0306 protein YhbP, found in Shigella sonnei (strain Ss046).